A 125-amino-acid polypeptide reads, in one-letter code: Larval cuticle protein LCP-14 (125 aa).

The signal sequence occupies residues 1–16 (MKSFIVALCVVGCVLA). A Chitin-binding type R&amp;R domain is found at 33–102 (EGSYNYAFES…PQADFLPTPP (70 aa)).

Its function is as follows. Component of the cuticle of the larva of tobacco hornworm. This Manduca sexta (Tobacco hawkmoth) protein is Larval cuticle protein LCP-14 (LCP-14).